We begin with the raw amino-acid sequence, 385 residues long: Lipid-A-disaccharide synthase 2 (385 aa).

It belongs to the LpxB family.

It carries out the reaction a lipid X + a UDP-2-N,3-O-bis[(3R)-3-hydroxyacyl]-alpha-D-glucosamine = a lipid A disaccharide + UDP + H(+). Its pathway is bacterial outer membrane biogenesis; LPS lipid A biosynthesis. In terms of biological role, condensation of UDP-2,3-diacylglucosamine and 2,3-diacylglucosamine-1-phosphate to form lipid A disaccharide, a precursor of lipid A, a phosphorylated glycolipid that anchors the lipopolysaccharide to the outer membrane of the cell. The polypeptide is Lipid-A-disaccharide synthase 2 (Legionella pneumophila subsp. pneumophila (strain Philadelphia 1 / ATCC 33152 / DSM 7513)).